Reading from the N-terminus, the 289-residue chain is Glycine--tRNA ligase alpha subunit (289 aa).

The protein belongs to the class-II aminoacyl-tRNA synthetase family. As to quaternary structure, tetramer of two alpha and two beta subunits.

Its subcellular location is the cytoplasm. It catalyses the reaction tRNA(Gly) + glycine + ATP = glycyl-tRNA(Gly) + AMP + diphosphate. This chain is Glycine--tRNA ligase alpha subunit, found in Rickettsia bellii (strain OSU 85-389).